Consider the following 326-residue polypeptide: Ficolin-1 (326 aa).

An N-terminal signal peptide occupies residues 1–29; it reads MELSRVAVALGPTGQLLLFLSFQTLAAQA. A Collagen-like domain is found at 55 to 93; sequence GLPGAAGPKGEAGANGPKGERGSPGVVGKAGPAGPKGDR. 2 stretches are compositionally biased toward low complexity: residues 61-71 and 78-89; these read GPKGEAGANGP and PGVVGKAGPAGP. A disordered region spans residues 61 to 110; the sequence is GPKGEAGANGPKGERGSPGVVGKAGPAGPKGDRGEKGARGEKGEPGQLQS. Over residues 90–104 the composition is skewed to basic and acidic residues; the sequence is KGDRGEKGARGEKGE. A Fibrinogen C-terminal domain is found at 109-326; that stretch reads QSCATGPRTC…QVSEMKVRLT (218 aa). 2 disulfide bridges follow: C111-C139 and C118-C146. The tract at residues 115–154 is a domain; contributes to trimerization; that stretch reads PRTCKELLTRGHFLSGWHTIYLPDCQPLTVLCDMDTDGGG. The interval 155-243 is b domain; contributes to trimerization; that stretch reads WTVFQRRSDG…LVLGGFLEGN (89 aa). Residues D262 and D264 each coordinate Ca(2+). N265 carries an N-linked (GlcNAc...) asparagine glycan. C270 and C283 are disulfide-bonded. A carbohydrate is bound at residue 282–284; it reads ACH. N-linked (GlcNAc...) asparagine glycosylation is present at N313. Positions 317-326 are p domain; sequence QVSEMKVRLT.

Belongs to the ficolin lectin family. In terms of assembly, homotrimer. Interacts with elastin/ELN. Interacts (via Fibrinogen C-terminal domain) with FFAR2. Interacts with CRP; may regulate monocyte activation by FCN1. As to expression, most abundantly expressed in placenta and lung.

Its subcellular location is the secreted. It localises to the cell membrane. Its function is as follows. Extracellular lectin functioning as a pattern-recognition receptor in innate immunity. Binds the sugar moieties of pathogen-associated molecular patterns (PAMPs) displayed on microbes and activates the lectin pathway of the complement system. May also activate monocytes through a G protein-coupled receptor, FFAR2, inducing the secretion of interleukin-8/IL-8. Binds preferentially to 9-O-acetylated 2-6-linked sialic acid derivatives and to various glycans containing sialic acid engaged in a 2-3 linkage. This is Ficolin-1 (FCN1) from Sus scrofa (Pig).